The primary structure comprises 25 residues: Small ribosomal subunit protein eS32 (25 aa).

The interval 1–25 (MGGVGKTKRMRRLKRKRRKMRQRSK) is disordered.

This sequence belongs to the eukaryotic ribosomal protein eS32 family. As to quaternary structure, component of the small ribosomal subunit.

This Glycine max (Soybean) protein is Small ribosomal subunit protein eS32 (RPL41).